Reading from the N-terminus, the 134-residue chain is Protein Turandot E (134 aa).

An N-terminal signal peptide occupies residues 1–38 (MSYNRTLHSTTSILKMNSALQISCLLLVLGCLLGSGHG).

Belongs to the Turandot family.

The protein localises to the secreted. In terms of biological role, a humoral factor that may play a role in stress tolerance. The sequence is that of Protein Turandot E from Drosophila yakuba (Fruit fly).